A 386-amino-acid chain; its full sequence is CRISPR system endoribonuclease Csm6' (386 aa).

A CARF domain region spans residues 1–146; it reads MRVLISAVGD…ASNENIGHDN (146 aa). The HEPN domain stretch occupies residues 147–386; sequence DENIDELIEV…LNKILLTKLN (240 aa).

The protein belongs to the CRISPR-associated Csm6 family. In terms of assembly, homodimer. The composite ssRNase active site is formed at the dimer interface.

Its activity is regulated as follows. Non-specific ssRNase activity is stimulated about 1000-fold by cyclic oligoadenylate (cOA), a second messenger produced by Cas10 of the ternary Csm effector complex in the presence of a cognate target RNA. Functionally, CRISPR (clustered regularly interspaced short palindromic repeat) is an adaptive immune system that provides protection against mobile genetic elements (viruses, transposable elements and conjugative plasmids). CRISPR clusters contain spacers, sequences complementary to antecedent mobile elements, and target invading nucleic acids. CRISPR clusters are transcribed and processed into CRISPR RNA (crRNA). The type III-A Csm complex binds crRNA and acts as a crRNA-guided RNase, DNase and cyclic oligoadenylate synthase; binding of target RNA cognate to the crRNA is required for all activities. In a heterologous host this Csm effector complex restricts ssRNA phage MS2, suggesting it may target RNA viruses in vivo. This protein is not part of the Csm complex. Its function is as follows. Csm functions as a non-specific ssDNase. Base-pairing between crRNA and target RNA to form a ternary Csm complex activates a ssDNase activity; target RNA cleavage suppresses the ssDNase, a temporal control that prevents uncontrolled DNA degradation. Viral RNA transcripts probably tether the Csm complex to the viral genome, recruiting Cas10 ssDNA activity which is able to degrade DNA in the transcription bubble, spatially controlling the DNase activity. A single-strand-specific endoribonuclease (ssRNase) that is approximately 1000-fold stimulated by cyclic oligoadenylate (cOA); although several species of cOA are synthesized by this organism only cyclic hexaadenylate (cA6) stimulates the ssRNase activity. Cleaves preferentially within GA or AA dinucleotides, although the presence of cA6 broadens the preference. The protein is CRISPR system endoribonuclease Csm6' of Streptococcus thermophilus.